The sequence spans 1276 residues: MRSKARARKLAKSDGDVVNNMYEPNRDLLASHSAEDEAEDSAMSPIPVGPPSPFPTSEDFTPKEGSPYEAPVYIPEDIPIPADFELRESSIPGAGLGVWAKRKMEAGERLGPCVVVPRAAAKETDFGWEQILTDVEVSPQEGCITKISEDLGSEKFCVDANQAGAGSWLKYIRVACSCDDQNLTMCQISEQIYYKVIKDIEPGEELLVHVKEGVYPLGTVPPGLDEEPTFRCDECDELFQSKLDLRRHKKYTCGSVGAALYEGLAEELKPEGLGGGSGQAHECKDCERMFPNKYSLEQHMVIHTEEREYKCDQCPKAFNWKSNLIRHQMSHDSGKRFECENCVKVFTDPSNLQRHIRSQHVGARAHACPDCGKTFATSSGLKQHKHIHSTVKPFICEVCHKSYTQFSNLCRHKRMHADCRTQIKCKDCGQMFSTTSSLNKHRRFCEGKNHYTPGGIFAPGLPLTPSPMMDKAKPSPSLNHASLGFNEYFPSRPHPGSLPFSTAPPTFPALTPGFPGIFPPSLYPRPPLLPPTSLLKSPLNHTQDAKLPSPLGNPALPLVSAVSNSSQGTTAAAGPEEKFESRLEDSCVEKLKTRSSDMSDGSDFEDVNTTTGTDLDTTTGTGSDLDSDVDSDPDKDKGKGKSAEGQPKFGGGLAPPGAPNSVAEVPVFYSQHSFFPPPDEQLLTATGAAGDSIKAIASIAEKYFGPGFMGMQEKKLGSLPYHSAFPFQFLPNFPHSLYPFTDRALAHNLLVKAEPKSPRDALKVGGPSAECPFDLTTKPKDVKPILPMPKGPSAPASGEEQPLDLSIGSRARASQNGGGREPRKNHVYGERKLGAGEGLPQVCPARMPQQPPLHYAKPSPFFMDPIYSRVEKRKVTDPVGALKEKYLRPSPLLFHPQMSAIETMTEKLESFAAMKADSGSSLQPLPHHPFNFRSPPPTLSDPILRKGKERYTCRYCGKIFPRSANLTRHLRTHTGEQPYRCKYCDRSFSISSNLQRHVRNIHNKEKPFKCHLCNRCFGQQTNLDRHLKKHEHENAPVSQHPGVLTNHLGTSASSPTSESDNHALLDEKEDSYFSEIRNFIANSEMNQASTRTEKRADMQIVDGSAQCPGLASEKQEDVEEEDDDDLEEDDEDSLAGKSQDDTVSPAPEPQAAYEDEEDEEPAASLAVGFDHTRRCAEDHEGGLLALEPMPTFGKGLDLRRAAEEAFEVKDVLNSTLDSEALKHTLCRQAKNQAYAMMLSLSEDTPLHTPSQGSLDAWLKVTGATSESGAFHPINHL.

Positions 1–10 (MRSKARARKL) are enriched in basic residues. A disordered region spans residues 1–68 (MRSKARARKL…DFTPKEGSPY (68 aa)). The region spanning 82 to 211 (ADFELRESSI…PGEELLVHVK (130 aa)) is the SET domain. The C2H2-type 1; atypical zinc finger occupies 230-253 (FRCDECDELFQSKLDLRRHKKYTC). 5 C2H2-type zinc fingers span residues 281–303 (HECKDCERMFPNKYSLEQHMVIH), 309–331 (YKCDQCPKAFNWKSNLIRHQMSH), 337–360 (FECENCVKVFTDPSNLQRHIRSQH), 366–388 (HACPDCGKTFATSSGLKQHKHIH), and 394–416 (FICEVCHKSYTQFSNLCRHKRMH). The segment at 423–445 (IKCKDCGQMFSTTSSLNKHRRFC) adopts a C2H2-type 7; atypical zinc-finger fold. Disordered stretches follow at residues 533–657 (SLLK…APPG) and 772–804 (PFDLTTKPKDVKPILPMPKGPSAPASGEEQPLD). The span at 561-570 (AVSNSSQGTT) shows a compositional bias: polar residues. Residues 575–597 (PEEKFESRLEDSCVEKLKTRSSD) show a composition bias toward basic and acidic residues. Positions 609–624 (TTTGTDLDTTTGTGSD) are enriched in low complexity. Residues 632–642 (DPDKDKGKGKS) show a composition bias toward basic and acidic residues. The interaction with CTBP1, CTBP2 and ZNF516 stretch occupies residues 679–1038 (DEQLLTATGA…KHEHENAPVS (360 aa)). Positions 739–1276 (PFTDRALAHN…SGAFHPINHL (538 aa)) are mediates interaction with SKI and regulation of TGF-beta signaling. C2H2-type zinc fingers lie at residues 951–973 (YTCRYCGKIFPRSANLTRHLRTH), 979–1002 (YRCKYCDRSFSISSNLQRHVRNIH), and 1008–1032 (FKCHLCNRCFGQQTNLDRHLKKHEH). 2 disordered regions span residues 1033–1065 (ENAPVSQHPGVLTNHLGTSASSPTSESDNHALL) and 1105–1163 (AQCP…EPAA). The span at 1047–1058 (HLGTSASSPTSE) shows a compositional bias: polar residues. Residues 1116–1133 (EDVEEEDDDDLEEDDEDS) show a composition bias toward acidic residues.

It belongs to the PRDM16 family. In terms of assembly, interacts with CEBPA, CEBPB and CEBPD; the interaction is direct. Interacts with PPARG and PPARA; controls brown adipocytes differentiation. Interacts with CTBP1 and CTBP2; represses the expression of WAT-specific genes. Interacts with PPARGC1A and PPARGC1B; interaction with PPARGC1A or PPARGC1B activates the transcription of BAT-specific gene. Interacts with HDAC1, SKI, SMAD2 and SMAD3; the interaction with SKI promotes the recruitment of SMAD3-HDAC1 complex on the promoter of TGF-beta target genes. Interacts with ZNF516; the interaction is direct and may play a role in the transcription of brown adipose tissue-specific gene. In terms of tissue distribution, expressed in uterus and kidney. Expressed in both cardiomyocytes and interstitial cells.

Its subcellular location is the nucleus. The protein resides in the cytoplasm. The catalysed reaction is L-lysyl(9)-[histone H3] + S-adenosyl-L-methionine = N(6)-methyl-L-lysyl(9)-[histone H3] + S-adenosyl-L-homocysteine + H(+). Its function is as follows. Binds DNA and functions as a transcriptional regulator. Displays histone methyltransferase activity and monomethylates 'Lys-9' of histone H3 (H3K9me1) in vitro. Probably catalyzes the monomethylation of free histone H3 in the cytoplasm which is then transported to the nucleus and incorporated into nucleosomes where SUV39H methyltransferases use it as a substrate to catalyze histone H3 'Lys-9' trimethylation. Likely to be one of the primary histone methyltransferases along with MECOM/PRDM3 that direct cytoplasmic H3K9me1 methylation. Functions in the differentiation of brown adipose tissue (BAT) which is specialized in dissipating chemical energy in the form of heat in response to cold or excess feeding while white adipose tissue (WAT) is specialized in the storage of excess energy and the control of systemic metabolism. Together with CEBPB, regulates the differentiation of myoblastic precursors into brown adipose cells. Functions as a repressor of TGF-beta signaling. Binds DNA and functions as a transcriptional regulator. Functions as a repressor of TGF-beta signaling. May regulate granulocyte differentiation. In Homo sapiens (Human), this protein is Histone-lysine N-methyltransferase PRDM16.